The following is a 441-amino-acid chain: uncharacterized protein (441 aa).

An ATP-binding site is contributed by 78 to 85; that stretch reads GPRQAGKT.

This is an uncharacterized protein from Mycobacterium bovis (strain ATCC BAA-935 / AF2122/97).